Reading from the N-terminus, the 428-residue chain is MGGLFSRWRTKLSTVEVLESIDKEIQALEEFREKNQRLQKLRVGRLILYSSVLYLFTCLIVYLWYLPDEFTARLAMTLPFFAFPLIIWSIRTVIIFFFSKRTERNNEALDDLKSQRKKILEEVMEKETYKTAKLILERFDPDSKKAKECEPPSAGGAVTARPGQEIRQRTAAQRNLSPTPASPNQGPPPQVPVSPGPPKDSSAPGGPPERTVTPALSSNVLPRHLGSPATSVPGMGLHPPGPPLARPILPRERGALDRIVEYLVGDGPQNRYALICQQCFSHNGMALKEEFEYIAFRCAYCFFLNPARKTRPQAPRLPEFSFEKRQVVEGSSSVGPLPSGSVLSSDNQFNEESLEQDVLDNNTEQTDDKIPATEQTNQVIEKASDSEEPEEKQETENEEASVIETNSTVPGADSIPDPELNGESLTAE.

Gly2 carries the N-myristoyl glycine lipid modification. Residues 2 to 45 (GGLFSRWRTKLSTVEVLESIDKEIQALEEFREKNQRLQKLRVGR) lie on the Cytoplasmic side of the membrane. Residues 16–43 (EVLESIDKEIQALEEFREKNQRLQKLRV) are a coiled coil. A helical membrane pass occupies residues 46 to 66 (LILYSSVLYLFTCLIVYLWYL). Residues 67 to 77 (PDEFTARLAMT) are Lumenal-facing. The chain crosses the membrane as a helical span at residues 78–98 (LPFFAFPLIIWSIRTVIIFFF). Residues 99–428 (SKRTERNNEA…ELNGESLTAE (330 aa)) are Cytoplasmic-facing. The stretch at 102 to 128 (TERNNEALDDLKSQRKKILEEVMEKET) forms a coiled coil. Phosphoserine is present on residues Ser114, Ser153, Ser177, Ser182, and Ser194. Residues 143 to 248 (SKKAKECEPP…PPGPPLARPI (106 aa)) form a disordered region. A compositionally biased stretch (pro residues) spans 185 to 198 (QGPPPQVPVSPGPP). Phosphothreonine is present on residues Thr211 and Thr213. Ser217 and Ser227 each carry phosphoserine. The segment at 276–301 (CQQCFSHNGMALKEEFEYIAFRCAYC) adopts a C4-type; plays a role in ER morphology zinc-finger fold. Ser321, Ser353, and Ser384 each carry phosphoserine. The segment at 361–428 (NNTEQTDDKI…ELNGESLTAE (68 aa)) is disordered. Over residues 386-401 (SEEPEEKQETENEEAS) the composition is skewed to acidic residues. Ser414 is subject to Phosphoserine.

This sequence belongs to the lunapark family. As to quaternary structure, homodimer; homodimerization requires the C4-type zinc finger motif and decreases during mitosis in a phosphorylation-dependent manner. In terms of processing, myristoylated; myristoylation is necessary for the endoplasmic reticulum (ER) three-way ER tubular junction formation, but is not required neither for membrane translocation, membrane topology formation, nor for the specific localization to ER membranes. Phosphorylated. Phosphorylation occurs at Ser-177, Ser-182, Ser-217, Ser-227, Ser-321 and Ser-384 during interphase. Phosphorylation occurs at Ser-114, Ser-153, Ser-194, Thr-211 and Ser-353 during mitosis; these phosphorylations reduce both its homodimerization and the ER three-way tubular junction formation. Post-translationally, subject to proteasomal degradation following phosphorylation during mitosis.

Its subcellular location is the endoplasmic reticulum membrane. Its function is as follows. Endoplasmic reticulum (ER)-shaping membrane protein that plays a role in determining ER morphology. Involved in the stabilization of nascent three-way ER tubular junctions within the ER network. May also play a role as a curvature-stabilizing protein within three-way ER tubular junction network. May be involved in limb and central nervous system development. This chain is Endoplasmic reticulum junction formation protein lunapark, found in Pongo abelii (Sumatran orangutan).